Reading from the N-terminus, the 98-residue chain is MVDRKGKGFRRKTRDKLSKHPRQRGKLTITRILQKFNNNDKVAIVIEPSWHYGMPHPRYHGLVGTVVGKRGNCYEVELEFNGEKKLLIVHPAHLKKVG.

The segment at 1–23 is disordered; sequence MVDRKGKGFRRKTRDKLSKHPRQ. Residues 7–23 are compositionally biased toward basic residues; the sequence is KGFRRKTRDKLSKHPRQ.

Belongs to the eukaryotic ribosomal protein eL21 family.

This chain is Large ribosomal subunit protein eL21, found in Nanoarchaeum equitans (strain Kin4-M).